The sequence spans 244 residues: Flavin-dependent thymidylate synthase (244 aa).

The 223-residue stretch at 17 to 239 folds into the ThyX domain; it reads ITVELVKHSA…PETHAAFEKQ (223 aa). Residues serine 68, 91-93, and glutamate 99 contribute to the FAD site; that span reads RHR. DUMP is bound by residues 88–91, 99–103, and arginine 171; these read EFMR and EESGR. Positions 91–101 match the ThyX motif motif; sequence RHRIASYNEES. FAD is bound by residues 187–189 and asparagine 193; that span reads NAR. Position 198 (arginine 198) interacts with dUMP. Residue arginine 198 is the Involved in ionization of N3 of dUMP, leading to its activation of the active site.

Belongs to the thymidylate synthase ThyX family. In terms of assembly, homotetramer. FAD serves as cofactor.

The enzyme catalyses dUMP + (6R)-5,10-methylene-5,6,7,8-tetrahydrofolate + NADPH + H(+) = dTMP + (6S)-5,6,7,8-tetrahydrofolate + NADP(+). The protein operates within pyrimidine metabolism; dTTP biosynthesis. Catalyzes the reductive methylation of 2'-deoxyuridine-5'-monophosphate (dUMP) to 2'-deoxythymidine-5'-monophosphate (dTMP) while utilizing 5,10-methylenetetrahydrofolate (mTHF) as the methyl donor, and NADPH and FADH(2) as the reductant. This Tropheryma whipplei (strain Twist) (Whipple's bacillus) protein is Flavin-dependent thymidylate synthase.